We begin with the raw amino-acid sequence, 83 residues long: Small ribosomal subunit protein eS21 (83 aa).

Belongs to the eukaryotic ribosomal protein eS21 family. In terms of assembly, component of the 40S small ribosomal subunit.

The protein localises to the cytoplasm. It is found in the cytosol. Its subcellular location is the rough endoplasmic reticulum. Functionally, component of the small ribosomal subunit. The ribosome is a large ribonucleoprotein complex responsible for the synthesis of proteins in the cell. The protein is Small ribosomal subunit protein eS21 (rps21) of Xenopus tropicalis (Western clawed frog).